We begin with the raw amino-acid sequence, 141 residues long: Putative nickel-responsive regulator (141 aa).

His-80, His-91, His-93, and Cys-99 together coordinate Ni(2+).

The protein belongs to the transcriptional regulatory CopG/NikR family. It depends on Ni(2+) as a cofactor.

Its function is as follows. Transcriptional regulator. The sequence is that of Putative nickel-responsive regulator from Methanococcus aeolicus (strain ATCC BAA-1280 / DSM 17508 / OCM 812 / Nankai-3).